A 238-amino-acid chain; its full sequence is Sugar fermentation stimulation protein homolog (238 aa).

This sequence belongs to the SfsA family.

The protein is Sugar fermentation stimulation protein homolog of Haemophilus influenzae (strain PittGG).